The following is a 253-amino-acid chain: uncharacterized protein (253 aa).

This sequence belongs to the herpesviridae BTRF1 family.

This is an uncharacterized protein from Saimiriine herpesvirus 2 (strain 11) (SaHV-2).